Here is a 496-residue protein sequence, read N- to C-terminus: N-acetylmuramoyl-L-alanine amidase LytC (496 aa).

An N-terminal signal peptide occupies residues 1-24 (MRSYIKVLTMCFLGLILFVPTALA). 3 consecutive repeat copies span residues 30–128 (RVGG…ISIK), 129–222 (RIAG…PSPT), and 223–318 (RISG…NPVV). Residues 30 to 318 (RVGGSNRYGT…VANQLKNPVV (289 aa)) form a 3 X tandem repeats region. Residues 322–490 (IFIDPGHGDQ…DKAAQAIHDG (169 aa)) form the MurNAc-LAA domain.

This sequence belongs to the N-acetylmuramoyl-L-alanine amidase 3 family.

The protein resides in the secreted. The protein localises to the cell wall. The catalysed reaction is Hydrolyzes the link between N-acetylmuramoyl residues and L-amino acid residues in certain cell-wall glycopeptides.. Its function is as follows. Autolysins are cell wall hydrolases involved in some important biological processes such as cell separation, cell-wall turnover, competence for genetic transformation, formation of the flagella - in particular of its basal body - and sporulation. Has a high affinity for teichoic acid-endowed peptidoglycan. LytC is required for efficient swarming motility but not at the level of cell separation or flagellum biosynthesis. Rather, LytC appears to be important for proper flagellar function. In Bacillus subtilis (strain 168), this protein is N-acetylmuramoyl-L-alanine amidase LytC (lytC).